A 378-amino-acid chain; its full sequence is UPF0754 membrane protein BC_0879 (378 aa).

The chain crosses the membrane as a helical span at residues 357 to 377; the sequence is YLGALLGGMIGLVQGLLLLFL.

The protein belongs to the UPF0754 family.

It is found in the cell membrane. This chain is UPF0754 membrane protein BC_0879, found in Bacillus cereus (strain ATCC 14579 / DSM 31 / CCUG 7414 / JCM 2152 / NBRC 15305 / NCIMB 9373 / NCTC 2599 / NRRL B-3711).